Consider the following 217-residue polypeptide: MRILLALTWLAWLGACTSIEQPRPDFADDDLPPIATAPAAGRSGGVFNAVTAWSLASDGRAYRPGDTLTVTLEETTQASKRADTKFGKNGDMAVKPGVLFGSTVPFDSSFGAKRNFDGGGSSSQQNTLRGEITVIVNQVLAGGLLQVKGEKVLSLNQGEEVMRLSGYVRQADIDTNNRVSSRRIANARIKYVGKGALSDSNSAGWLTRFFNSPWMPF.

An N-terminal signal peptide occupies residues 1–15; sequence MRILLALTWLAWLGA. Residue C16 is the site of N-palmitoyl cysteine attachment. C16 carries S-diacylglycerol cysteine lipidation.

This sequence belongs to the FlgH family. The basal body constitutes a major portion of the flagellar organelle and consists of four rings (L,P,S, and M) mounted on a central rod.

Its subcellular location is the cell outer membrane. It is found in the bacterial flagellum basal body. In terms of biological role, assembles around the rod to form the L-ring and probably protects the motor/basal body from shearing forces during rotation. The chain is Flagellar L-ring protein 2 from Burkholderia thailandensis (strain ATCC 700388 / DSM 13276 / CCUG 48851 / CIP 106301 / E264).